The following is a 37-amino-acid chain: Large ribosomal subunit protein bL36 (37 aa).

It belongs to the bacterial ribosomal protein bL36 family.

The chain is Large ribosomal subunit protein bL36 from Marinobacter nauticus (strain ATCC 700491 / DSM 11845 / VT8) (Marinobacter aquaeolei).